We begin with the raw amino-acid sequence, 507 residues long: Maturase K (507 aa).

Belongs to the intron maturase 2 family. MatK subfamily.

The protein resides in the plastid. Its subcellular location is the chloroplast. Functionally, usually encoded in the trnK tRNA gene intron. Probably assists in splicing its own and other chloroplast group II introns. The polypeptide is Maturase K (Ranunculus macranthus (Large buttercup)).